A 294-amino-acid chain; its full sequence is Nucleotide-binding protein CA_C0511 (294 aa).

Position 8–15 (8–15) interacts with ATP; that stretch reads GLSGAGKT. 59-62 contacts GTP; the sequence is DIRG.

It belongs to the RapZ-like family.

Functionally, displays ATPase and GTPase activities. The chain is Nucleotide-binding protein CA_C0511 from Clostridium acetobutylicum (strain ATCC 824 / DSM 792 / JCM 1419 / IAM 19013 / LMG 5710 / NBRC 13948 / NRRL B-527 / VKM B-1787 / 2291 / W).